Consider the following 429-residue polypeptide: Fumarylacetoacetase (429 aa).

Asp-139 contacts Ca(2+). His-146 acts as the Proton acceptor in catalysis. Residue Arg-155 participates in substrate binding. 3 residues coordinate Ca(2+): Glu-212, Glu-214, and Asp-246. Asp-246 lines the Mg(2+) pocket. Gln-253 is a substrate binding site. Lys-266 and Thr-270 together coordinate Mg(2+). Thr-363 is a binding site for substrate.

The protein belongs to the FAH family. Requires Ca(2+) as cofactor. The cofactor is Mg(2+).

The enzyme catalyses 4-fumarylacetoacetate + H2O = acetoacetate + fumarate + H(+). The protein operates within amino-acid degradation; L-phenylalanine degradation; acetoacetate and fumarate from L-phenylalanine: step 6/6. Functionally, converts fumarylacetoacetate to acetoacetate and fumarate. Involved in tyrosine catabolic pathway. Catalyzes the final step in the tyrosine degradation pathway. The protein is Fumarylacetoacetase of Oryza sativa subsp. japonica (Rice).